A 158-amino-acid chain; its full sequence is NADH-quinone oxidoreductase subunit B (158 aa).

Positions 37, 38, 102, and 132 each coordinate [4Fe-4S] cluster.

It belongs to the complex I 20 kDa subunit family. As to quaternary structure, NDH-1 is composed of 14 different subunits. Subunits NuoB, C, D, E, F, and G constitute the peripheral sector of the complex. [4Fe-4S] cluster is required as a cofactor.

The protein localises to the cell inner membrane. The catalysed reaction is a quinone + NADH + 5 H(+)(in) = a quinol + NAD(+) + 4 H(+)(out). In terms of biological role, NDH-1 shuttles electrons from NADH, via FMN and iron-sulfur (Fe-S) centers, to quinones in the respiratory chain. Couples the redox reaction to proton translocation (for every two electrons transferred, four hydrogen ions are translocated across the cytoplasmic membrane), and thus conserves the redox energy in a proton gradient. This Dechloromonas aromatica (strain RCB) protein is NADH-quinone oxidoreductase subunit B.